A 174-amino-acid chain; its full sequence is Gamma-crystallin C (174 aa).

2 Beta/gamma crystallin 'Greek key' domains span residues 2 to 40 (GKIT…RVDS) and 41 to 83 (GCWM…CLIP). Cys23 is modified (S-methylcysteine). The interval 84–87 (QTSS) is connecting peptide. 2 Beta/gamma crystallin 'Greek key' domains span residues 88 to 128 (HRLR…HVLE) and 129 to 171 (GCWV…RRVV).

Belongs to the beta/gamma-crystallin family. As to quaternary structure, monomer.

In terms of biological role, crystallins are the dominant structural components of the vertebrate eye lens. The sequence is that of Gamma-crystallin C (CRYGC) from Canis lupus familiaris (Dog).